Reading from the N-terminus, the 160-residue chain is General odorant-binding protein 2 (160 aa).

The signal sequence occupies residues 1–20 (MFSFLILVFVASVADSVIGT). 3 disulfides stabilise this stretch: cysteine 38/cysteine 73, cysteine 69/cysteine 127, and cysteine 116/cysteine 136.

The protein belongs to the PBP/GOBP family. As to quaternary structure, homodimer. In terms of tissue distribution, detected in antenna (at protein level). Expressed at high levels in antenna.

In terms of biological role, present in the aqueous fluid surrounding olfactory sensory dendrites and are thought to aid in the capture and transport of hydrophobic odorants into and through this fluid. In Bombyx mori (Silk moth), this protein is General odorant-binding protein 2.